A 51-amino-acid polypeptide reads, in one-letter code: Insulin (51 aa).

Cystine bridges form between C7/C37, C19/C50, and C36/C41.

The protein belongs to the insulin family. Heterodimer of a B chain and an A chain linked by two disulfide bonds.

Its subcellular location is the secreted. Functionally, insulin decreases blood glucose concentration. It increases cell permeability to monosaccharides, amino acids and fatty acids. It accelerates glycolysis, the pentose phosphate cycle, and glycogen synthesis in liver. This chain is Insulin (INS), found in Anser anser anser (Western greylag goose).